An 87-amino-acid chain; its full sequence is Pyocin-S1 immunity protein (87 aa).

This sequence belongs to the colicins ColE2/ColE8/ColE9 and pyocins S1/S2 family.

The chain is Pyocin-S1 immunity protein (imm1) from Pseudomonas aeruginosa.